A 245-amino-acid polypeptide reads, in one-letter code: NAD(P)H-quinone oxidoreductase subunit K (245 aa).

The [4Fe-4S] cluster site is built by C58, C59, C123, and C154. Residues 210–245 (SDTRSAPPKELAEAIGMPIPPALLTEKAQKEEQTRG) are disordered. The span at 236 to 245 (KAQKEEQTRG) shows a compositional bias: basic and acidic residues.

The protein belongs to the complex I 20 kDa subunit family. As to quaternary structure, NDH-1 can be composed of about 15 different subunits; different subcomplexes with different compositions have been identified which probably have different functions. [4Fe-4S] cluster serves as cofactor.

It is found in the cellular thylakoid membrane. The catalysed reaction is a plastoquinone + NADH + (n+1) H(+)(in) = a plastoquinol + NAD(+) + n H(+)(out). It catalyses the reaction a plastoquinone + NADPH + (n+1) H(+)(in) = a plastoquinol + NADP(+) + n H(+)(out). Its function is as follows. NDH-1 shuttles electrons from an unknown electron donor, via FMN and iron-sulfur (Fe-S) centers, to quinones in the respiratory and/or the photosynthetic chain. The immediate electron acceptor for the enzyme in this species is believed to be plastoquinone. Couples the redox reaction to proton translocation, and thus conserves the redox energy in a proton gradient. Cyanobacterial NDH-1 also plays a role in inorganic carbon-concentration. This chain is NAD(P)H-quinone oxidoreductase subunit K, found in Nostoc punctiforme (strain ATCC 29133 / PCC 73102).